We begin with the raw amino-acid sequence, 174 residues long: Large ribosomal subunit protein bL12cy (174 aa).

Residues 1 to 45 (MASTTFSSAFSILSLPSSSPSPPPWAPRTLPVANRRRRAAAVAST) constitute a chloroplast transit peptide.

Belongs to the bacterial ribosomal protein bL12 family.

It localises to the plastid. The protein resides in the chloroplast. The polypeptide is Large ribosomal subunit protein bL12cy (RPL12-2) (Secale cereale (Rye)).